The following is a 162-amino-acid chain: Caveolin-2 (162 aa).

Topologically, residues 1 to 86 (MGLETEKADV…FEISKYVMYK (86 aa)) are cytoplasmic. Residue tyrosine 19 is modified to Phosphotyrosine; by SRC. Phosphoserine is present on residues serine 20 and serine 23. Phosphotyrosine; by SRC is present on tyrosine 27. Position 36 is a phosphoserine (serine 36). Positions 87 to 107 (FLTVFLAIPLAFIAGILFATL) form an intramembrane region, helical. Topologically, residues 108-162 (SCLHIWILMPFVKTCLMVLPSVQTIWKSVTDVFIAPLCTSVGRSFSSVSLQLSQD) are cytoplasmic.

This sequence belongs to the caveolin family. As to quaternary structure, monomer or homodimer. Interacts with CAV1; the interaction forms a stable heterooligomeric complex that is required for targeting to lipid rafts and for caveolae formation. Tyrosine phosphorylated forms do not form heterooligomers with the Tyr-19-phosphorylated form existing as a monomer or dimer, and the Tyr-27-form as a monomer only. Interacts (tyrosine phosphorylated form) with the SH2 domain-containing proteins, RASA1, NCK1 and SRC. Interacts (tyrosine phosphorylated form) with INSR, the interaction (Tyr-27-phosphorylated form) is increased on insulin stimulation. Interacts (Tyr-19 phosphorylated form) with MAPK1 (phosphorylated form); the interaction, promoted by insulin, leads to nuclear location and MAPK1 activation. Interacts with STAT3; the interaction is increased on insulin-induced tyrosine phosphorylation leading to STAT activation. Post-translationally, phosphorylated on serine and tyrosine residues. CAV1 promotes phosphorylation on Ser-23 which then targets the complex to the plasma membrane, lipid rafts and caveolae. Phosphorylation on Ser-36 appears to modulate mitosis in endothelial cells. Phosphorylation on both Tyr-19 and Tyr-27 is required for insulin-induced 'Ser-727' phosphorylation of STAT3 and its activation. Phosphorylation on Tyr-19 is required for insulin-induced phosphorylation of MAPK1 and DNA binding of STAT3. Tyrosine phosphorylation is induced by both EGF and insulin (By. similarity).

It is found in the nucleus. The protein localises to the cytoplasm. Its subcellular location is the golgi apparatus membrane. It localises to the cell membrane. The protein resides in the membrane. It is found in the caveola. May act as a scaffolding protein within caveolar membranes. Interacts directly with G-protein alpha subunits and can functionally regulate their activity. Acts as an accessory protein in conjunction with CAV1 in targeting to lipid rafts and driving caveolae formation. The Ser-36 phosphorylated form has a role in modulating mitosis in endothelial cells. Positive regulator of cellular mitogenesis of the MAPK signaling pathway. Required for the insulin-stimulated nuclear translocation and activation of MAPK1 and STAT3, and the subsequent regulation of cell cycle progression. The chain is Caveolin-2 (CAV2) from Chlorocebus aethiops (Green monkey).